Consider the following 205-residue polypeptide: Guanylate kinase (205 aa).

Positions 5 to 183 (GLLIVFSGPS…AAERVKKIIE (179 aa)) constitute a Guanylate kinase-like domain. ATP is bound at residue 12 to 19 (GPSGVGKG).

This sequence belongs to the guanylate kinase family.

The protein resides in the cytoplasm. The catalysed reaction is GMP + ATP = GDP + ADP. Its function is as follows. Essential for recycling GMP and indirectly, cGMP. This is Guanylate kinase (gmk) from Lactococcus lactis subsp. lactis (strain IL1403) (Streptococcus lactis).